We begin with the raw amino-acid sequence, 307 residues long: MEADKDDTQQILKEHSPDEFIKDEQNKGLIDEITKKNIQLKKEIQKLETELQEATKEFQIKEDIPETKMKFLSVETPENDSQLSNISCSFQVSSKVPYEIQKGQALITFEKEEVAQNVVSMSKHHVQIKDVNLEVTAKPVPLNSGVRFQVYVEVSKMKINVTEIPDTLREDQMRDKLELSFSKSRNGGGEVDRVDYDRQSGSAVITFVEIGVADKILKKKEYPLYINQTCHRVTVSPYTEIHLKKYQIFSGTSKRTVLLTGMEGIQMDEEIVEDLINIHFQRAKNGGGEVDVVKCSLGQPHIAYFEE.

Residues 1–24 (MEADKDDTQQILKEHSPDEFIKDE) are disordered. The residue at position 16 (Ser16) is a Phosphoserine. A Glycyl lysine isopeptide (Lys-Gly) (interchain with G-Cter in ubiquitin) cross-link involves residue Lys22. The stretch at 30–64 (IDEITKKNIQLKKEIQKLETELQEATKEFQIKEDI) forms a coiled coil. NID domains are found at residues 103–192 (GQAL…GEVD) and 201–292 (GSAV…EVDV).

This sequence belongs to the NMI family. In terms of assembly, interacts with MYCN and MYC, as well as with other transcription factors with a Zip, HLH or a HLH-Zip motif. Interacts with all STAT proteins except STAT2. Interacts with IRF7, the interaction is direct and leads to the inhibition of IRF7-mediated type I IFN production. Interacts (via coiled-coil domain) with TRIM21 (via the SPRY domain); the interaction leads to 'Lys-63'-linked ubiquitination of NMI. Interacts with IFI35; the interaction is direct and is facilitated by TRIM21. Interacts with TLR4; the interaction is direct and leads to NF-kappa-B activation. As to quaternary structure, (Microbial infection) Interacts with human cytomegalovirus protein UL23; this interaction inhibits NMI-mediated transcription of interferon-gamma stimulated genes. Post-translationally, ubiquitinated. 'Lys-63'-linked ubiquitination by TRIM21 promotes interaction with IFI35 and inhibits virus-triggered type I IFN-beta production. As to expression, expressed in adult spleen, liver, and kidney. Expressed in fetal thymus, liver, placenta, spleen, lung, and kidney but not brain. Expressed in macrophages.

It is found in the cytoplasm. The protein resides in the nucleus. The protein localises to the secreted. Functionally, acts as a signaling pathway regulator involved in innate immune system response. In response to interleukin 2/IL2 and interferon IFN-gamma/IFNG, interacts with signal transducer and activator of transcription/STAT which activate the transcription of downstream genes involved in a multitude of signals for development and homeostasis. Enhances the recruitment of CBP/p300 coactivators to STAT1 and STAT5, resulting in increased STAT1- and STAT5-dependent transcription. In response to interferon IFN-alpha, associates in a complex with signaling pathway regulator IFI35 to regulate immune response; the complex formation prevents proteasome-mediated degradation of IFI35. In complex with IFI35, inhibits virus-triggered type I IFN-beta production when ubiquitinated by ubiquitin-protein ligase TRIM21. In complex with IFI35, negatively regulates nuclear factor NF-kappa-B signaling by inhibiting the nuclear translocation, activation and transcription of NF-kappa-B subunit p65/RELA, resulting in the inhibition of endothelial cell proliferation, migration and re-endothelialization of injured arteries. Negatively regulates virus-triggered type I interferon/IFN production by inducing proteosome-dependent degradation of IRF7, a transcriptional regulator of type I IFN, thereby interfering with cellular antiviral responses. Beside its role as an intracellular signaling pathway regulator, also functions extracellularly as damage-associated molecular patterns (DAMPs) to promote inflammation, when actively released by macrophage to the extracellular space during cell injury or pathogen invasion. Macrophage-secreted NMI activates NF-kappa-B signaling in adjacent macrophages through Toll-like receptor 4/TLR4 binding and activation, thereby inducing NF-kappa-B translocation from the cytoplasm into the nucleus which promotes the release of pro-inflammatory cytokines. This chain is N-myc-interactor, found in Homo sapiens (Human).